Reading from the N-terminus, the 311-residue chain is Dermonecrotic toxin (311 aa).

A signal peptide spans 1–21 (MYVHLALILGCWTVVLQGAET). A propeptide spanning residues 22-26 (DVGER) is cleaved from the precursor. The active site involves H38. Positions 58 and 60 each coordinate Mg(2+). H73 acts as the Nucleophile in catalysis. C77 and C83 are oxidised to a cystine. Position 117 (D117) interacts with Mg(2+).

Belongs to the arthropod phospholipase D family. Class I subfamily. The cofactor is Mg(2+). Expressed by the venom gland.

The protein localises to the secreted. The enzyme catalyses an N-(acyl)-sphingosylphosphocholine = an N-(acyl)-sphingosyl-1,3-cyclic phosphate + choline. It carries out the reaction an N-(acyl)-sphingosylphosphoethanolamine = an N-(acyl)-sphingosyl-1,3-cyclic phosphate + ethanolamine. It catalyses the reaction a 1-acyl-sn-glycero-3-phosphocholine = a 1-acyl-sn-glycero-2,3-cyclic phosphate + choline. The catalysed reaction is a 1-acyl-sn-glycero-3-phosphoethanolamine = a 1-acyl-sn-glycero-2,3-cyclic phosphate + ethanolamine. With respect to regulation, catalytic activity and hemolysis are inhibited by divalent ion chelators (1,10-phenanthroline, EDTA, and EGTA). Dermonecrotic toxins cleave the phosphodiester linkage between the phosphate and headgroup of certain phospholipids (sphingolipid and lysolipid substrates), forming an alcohol (often choline) and a cyclic phosphate. This toxin acts on sphingomyelin (SM). It may also act on ceramide phosphoethanolamine (CPE), lysophosphatidylcholine (LPC) and lysophosphatidylethanolamine (LPE), but not on lysophosphatidylserine (LPS), and lysophosphatidylglycerol (LPG). It acts by transphosphatidylation, releasing exclusively cyclic phosphate products as second products. Shows complement-dependent hemolysis. Also induces dermonecrosis, vascular permeability, edema, inflammatory response, and platelet aggregation. In Loxosceles laeta (South American recluse spider), this protein is Dermonecrotic toxin.